Reading from the N-terminus, the 103-residue chain is MYALVEINGKQYKAIEGEFLKIDKISPVEKDKLEFNSVLLINKDGEVKIGKPYVVNSLIRCTYKEDKKDKKVVSYRYRRRKSSERKVGHRQTYSYILVDEIVF.

Belongs to the bacterial ribosomal protein bL21 family. Part of the 50S ribosomal subunit. Contacts protein L20.

Its function is as follows. This protein binds to 23S rRNA in the presence of protein L20. This chain is Large ribosomal subunit protein bL21, found in Borreliella burgdorferi (strain ZS7) (Borrelia burgdorferi).